The sequence spans 390 residues: Phosphopentomutase (390 aa).

Asp9, Asp283, His288, Asp324, His325, and His336 together coordinate Mn(2+).

This sequence belongs to the phosphopentomutase family. Requires Mn(2+) as cofactor.

The protein localises to the cytoplasm. It catalyses the reaction 2-deoxy-alpha-D-ribose 1-phosphate = 2-deoxy-D-ribose 5-phosphate. It carries out the reaction alpha-D-ribose 1-phosphate = D-ribose 5-phosphate. It participates in carbohydrate degradation; 2-deoxy-D-ribose 1-phosphate degradation; D-glyceraldehyde 3-phosphate and acetaldehyde from 2-deoxy-alpha-D-ribose 1-phosphate: step 1/2. Functionally, isomerase that catalyzes the conversion of deoxy-ribose 1-phosphate (dRib-1-P) and ribose 1-phosphate (Rib-1-P) to deoxy-ribose 5-phosphate (dRib-5-P) and ribose 5-phosphate (Rib-5-P), respectively. This chain is Phosphopentomutase, found in Thermotoga maritima (strain ATCC 43589 / DSM 3109 / JCM 10099 / NBRC 100826 / MSB8).